A 306-amino-acid polypeptide reads, in one-letter code: Putative NylC-analogous protein (306 aa).

This sequence belongs to the peptidase S58 family.

The polypeptide is Putative NylC-analogous protein (Agromyces sp. (strain KY5R)).